A 401-amino-acid chain; its full sequence is Adenosine 3'-phospho 5'-phosphosulfate transporter 2 (401 aa).

N12 and N71 each carry an N-linked (GlcNAc...) asparagine glycan. 6 helical membrane passes run 78 to 98 (LTQFFICVAGVFVFYLIYGYL), 111 to 131 (YGWYLTLVQFAFYSIFGLIEL), 147 to 167 (MIIAFLTVGTMGLSNTSLGYL), 170 to 190 (PTQVIFKCCKLIPVMLGGVFI), 200 to 220 (VSAAICMSLGLIWFTLADSTI), and 223 to 243 (NFNLTGVVLISLALCADAVIG). N254 carries an N-linked (GlcNAc...) asparagine glycan. 4 helical membrane passes run 267 to 287 (IGFVYILLGLTCTSGLGPAVT), 298 to 317 (GYAFLFSLTGYFGISFVLAL), 324 to 346 (LIAVTVTTGRKAMTIVLSFIFFA), and 349 to 369 (FTFQYVWSGLLVFLGIFLNVY).

The protein belongs to the nucleotide-sugar transporter family. SLC35B subfamily.

The protein localises to the golgi apparatus membrane. It carries out the reaction 3'-phosphoadenylyl sulfate(in) + adenosine 3',5'-bisphosphate(out) = 3'-phosphoadenylyl sulfate(out) + adenosine 3',5'-bisphosphate(in). Its function is as follows. Probably functions as a 3'-phosphoadenylyl sulfate:adenosine 3',5'-bisphosphate antiporter at the Golgi membranes. Mediates the transport from the cytosol into the lumen of the Golgi of 3'-phosphoadenylyl sulfate/adenosine 3'-phospho 5'-phosphosulfate (PAPS), a universal sulfuryl donor for sulfation events that take place in that compartment. The chain is Adenosine 3'-phospho 5'-phosphosulfate transporter 2 from Pongo abelii (Sumatran orangutan).